We begin with the raw amino-acid sequence, 329 residues long: Tyrosine--tRNA ligase (329 aa).

L-tyrosine contacts are provided by Tyr31, Tyr157, Gln161, Asp164, and Gln179. Residues 220–224 (KMSKS) carry the 'KMSKS' region motif. Position 223 (Lys223) interacts with ATP.

It belongs to the class-I aminoacyl-tRNA synthetase family. TyrS type 4 subfamily. As to quaternary structure, homodimer.

Its subcellular location is the cytoplasm. It catalyses the reaction tRNA(Tyr) + L-tyrosine + ATP = L-tyrosyl-tRNA(Tyr) + AMP + diphosphate + H(+). Its function is as follows. Catalyzes the attachment of tyrosine to tRNA(Tyr) in a two-step reaction: tyrosine is first activated by ATP to form Tyr-AMP and then transferred to the acceptor end of tRNA(Tyr). The sequence is that of Tyrosine--tRNA ligase from Picrophilus torridus (strain ATCC 700027 / DSM 9790 / JCM 10055 / NBRC 100828 / KAW 2/3).